A 212-amino-acid chain; its full sequence is Imidazole glycerol phosphate synthase subunit HisH (212 aa).

Positions T3–W212 constitute a Glutamine amidotransferase type-1 domain. Catalysis depends on C81, which acts as the Nucleophile. Active-site residues include H190 and E192.

Heterodimer of HisH and HisF.

It is found in the cytoplasm. It catalyses the reaction 5-[(5-phospho-1-deoxy-D-ribulos-1-ylimino)methylamino]-1-(5-phospho-beta-D-ribosyl)imidazole-4-carboxamide + L-glutamine = D-erythro-1-(imidazol-4-yl)glycerol 3-phosphate + 5-amino-1-(5-phospho-beta-D-ribosyl)imidazole-4-carboxamide + L-glutamate + H(+). The catalysed reaction is L-glutamine + H2O = L-glutamate + NH4(+). It functions in the pathway amino-acid biosynthesis; L-histidine biosynthesis; L-histidine from 5-phospho-alpha-D-ribose 1-diphosphate: step 5/9. IGPS catalyzes the conversion of PRFAR and glutamine to IGP, AICAR and glutamate. The HisH subunit catalyzes the hydrolysis of glutamine to glutamate and ammonia as part of the synthesis of IGP and AICAR. The resulting ammonia molecule is channeled to the active site of HisF. The chain is Imidazole glycerol phosphate synthase subunit HisH from Pseudomonas savastanoi pv. phaseolicola (strain 1448A / Race 6) (Pseudomonas syringae pv. phaseolicola (strain 1448A / Race 6)).